The following is a 345-amino-acid chain: MLTERQLLIFRAIIDHFTWTIQPVGSKNLLKEKGLPYSSATIRNEMGVLEEYGFIEKTHSSSGRVPSEKGYRFYVDYLLQLKKLDKSDRQMIRSFFSENYYEMEGLIQNSALMLSDLTNYTSILLGPEATKNHLSGFRFVPINNFQAMLILITDQGHVDNHLVTIPEGTTLSDIERMVNILNERLVGLSLDDLKVQIPMEVKELLGKHVRNYESFMHVFSDSFAQASQQKVYFGGKTNILNQPEFHDINKVREMLHLMEEEQDVYELFRDIPDGLQVKIGRENNNSLMEDCSIITATYNIAGERVGGIVLLGPTRMEYNRMMGLVDVMSRDLTDVLTKLYRDNQN.

Belongs to the HrcA family.

Its function is as follows. Negative regulator of class I heat shock genes (grpE-dnaK-dnaJ and groELS operons). Prevents heat-shock induction of these operons. The chain is Heat-inducible transcription repressor HrcA from Listeria welshimeri serovar 6b (strain ATCC 35897 / DSM 20650 / CCUG 15529 / CIP 8149 / NCTC 11857 / SLCC 5334 / V8).